A 611-amino-acid chain; its full sequence is Leucine aminopeptidase 2 (611 aa).

Residues 135 to 137 (QCQ) and 265 to 270 (PYGGME) each bind a peptide. His294 serves as a coordination point for Zn(2+). Residue Glu295 is the Proton acceptor of the active site. Residues His298 and Glu317 each coordinate Zn(2+). Residue Tyr383 is the Proton donor of the active site.

It belongs to the peptidase M1 family. Zn(2+) is required as a cofactor.

It is found in the cytoplasm. The protein localises to the nucleus. It catalyses the reaction an epoxide + H2O = an ethanediol. Functionally, aminopeptidase that preferentially cleaves di- and tripeptides. Also has low epoxide hydrolase activity (in vitro). Can hydrolyze the epoxide leukotriene LTA(4) but it forms preferentially 5,6-dihydroxy-7,9,11,14-eicosatetraenoic acid rather than the cytokine leukotriene B(4) as the product compared to the homologous mammalian enzyme (in vitro). The protein is Leucine aminopeptidase 2 of Chaetomium globosum (strain ATCC 6205 / CBS 148.51 / DSM 1962 / NBRC 6347 / NRRL 1970) (Soil fungus).